We begin with the raw amino-acid sequence, 690 residues long: Elongation factor G (690 aa).

Residues 8–283 (EDYRNFGIMA…AVVDYLPSPV (276 aa)) form the tr-type G domain. GTP is bound by residues 17 to 24 (AHIDAGKT), 81 to 85 (DTPGH), and 135 to 138 (NKMD).

This sequence belongs to the TRAFAC class translation factor GTPase superfamily. Classic translation factor GTPase family. EF-G/EF-2 subfamily.

The protein localises to the cytoplasm. Its function is as follows. Catalyzes the GTP-dependent ribosomal translocation step during translation elongation. During this step, the ribosome changes from the pre-translocational (PRE) to the post-translocational (POST) state as the newly formed A-site-bound peptidyl-tRNA and P-site-bound deacylated tRNA move to the P and E sites, respectively. Catalyzes the coordinated movement of the two tRNA molecules, the mRNA and conformational changes in the ribosome. The protein is Elongation factor G of Rhodopseudomonas palustris (strain BisA53).